The sequence spans 225 residues: Pyridoxine/pyridoxamine 5'-phosphate oxidase (225 aa).

Substrate contacts are provided by residues 9–12 (RVDY) and K78. FMN-binding positions include 73-78 (RTVLCK), 88-89 (YT), K95, and Q117. Substrate is bound by residues Y135, R139, and S143. FMN is bound by residues 152 to 153 (QS) and W198. 204–206 (RLH) lines the substrate pocket. R208 contributes to the FMN binding site.

Belongs to the pyridoxamine 5'-phosphate oxidase family. As to quaternary structure, homodimer. The cofactor is FMN.

The catalysed reaction is pyridoxamine 5'-phosphate + O2 + H2O = pyridoxal 5'-phosphate + H2O2 + NH4(+). The enzyme catalyses pyridoxine 5'-phosphate + O2 = pyridoxal 5'-phosphate + H2O2. The protein operates within cofactor metabolism; pyridoxal 5'-phosphate salvage; pyridoxal 5'-phosphate from pyridoxamine 5'-phosphate: step 1/1. It functions in the pathway cofactor metabolism; pyridoxal 5'-phosphate salvage; pyridoxal 5'-phosphate from pyridoxine 5'-phosphate: step 1/1. Functionally, catalyzes the oxidation of either pyridoxine 5'-phosphate (PNP) or pyridoxamine 5'-phosphate (PMP) into pyridoxal 5'-phosphate (PLP). The protein is Pyridoxine/pyridoxamine 5'-phosphate oxidase of Nocardia farcinica (strain IFM 10152).